The primary structure comprises 125 residues: UPF0738 protein GK0828 (125 aa).

The protein belongs to the UPF0738 family.

The polypeptide is UPF0738 protein GK0828 (Geobacillus kaustophilus (strain HTA426)).